Here is a 369-residue protein sequence, read N- to C-terminus: Putative esterase slr0264 (369 aa).

Residues Ser-162, Asp-303, and His-334 each act as charge relay system in the active site.

Belongs to the AB hydrolase superfamily. AB hydrolase 4 family.

This is Putative esterase slr0264 from Synechocystis sp. (strain ATCC 27184 / PCC 6803 / Kazusa).